Consider the following 201-residue polypeptide: Small ribosomal subunit protein uS4 (201 aa).

Residues 93–153 enclose the S4 RNA-binding domain; sequence QRLDNIVYRL…EKSKNLVIIK (61 aa).

It belongs to the universal ribosomal protein uS4 family. In terms of assembly, part of the 30S ribosomal subunit. Contacts protein S5. The interaction surface between S4 and S5 is involved in control of translational fidelity.

Its function is as follows. One of the primary rRNA binding proteins, it binds directly to 16S rRNA where it nucleates assembly of the body of the 30S subunit. Functionally, with S5 and S12 plays an important role in translational accuracy. In Latilactobacillus sakei subsp. sakei (strain 23K) (Lactobacillus sakei subsp. sakei), this protein is Small ribosomal subunit protein uS4.